The sequence spans 343 residues: MAEQLSPGKAVDQVCTFLFKKPGRKGAAGRRKRPACDPEPGESGSSSDEGCTVVRPEKKRVTHNPMIQKTRDSGKQKAAYGDLSSEEEEENEPESLGVVYKSTRSAKPVGPEDMGATAVYELDTEKERDAQAIFERSQKIQEELRGKEDDKIYRGINNYQKYMKPKDTSMGNASSGMVRKGPIRAPEHLRATVRWDYQPDICKDYKETGFCGFGDSCKFLHDRSDYKHGWQIERELDEGRYGVYEDENYEVGSDDEEIPFKCFICRQSFQNPVVTKCRHYFCESCALQHFRTTPRCYVCDQQTNGVFNPAKELIAKLEKHRATGEGGASDLPEDPDEDAIPIT.

Ala2 is modified (N-acetylalanine). Residues 2–60 (AEQLSPGKAVDQVCTFLFKKPGRKGAAGRRKRPACDPEPGESGSSSDEGCTVVRPEKKR) form an important for interaction with SNRNP200/BRR2 region. Ser6 is modified (phosphoserine). Residues 22 to 33 (PGRKGAAGRRKR) are compositionally biased toward basic residues. Residues 22–96 (PGRKGAAGRR…EEEENEPESL (75 aa)) form a disordered region. The segment covering 41–50 (GESGSSSDEG) has biased composition (low complexity). Residues 50–61 (GCTVVRPEKKRV) are important for interaction with CXCR4. Phosphoserine occurs at positions 84 and 85. The segment covering 84 to 93 (SSEEEEENEP) has biased composition (acidic residues). The segment at 196–224 (DYQPDICKDYKETGFCGFGDSCKFLHDRS) adopts a C3H1-type zinc-finger fold. Ser253 carries the post-translational modification Phosphoserine. The segment at 262–300 (CFICRQSFQNPVVTKCRHYFCESCALQHFRTTPRCYVCD) adopts an RING-type zinc-finger fold. The disordered stretch occupies residues 322 to 343 (ATGEGGASDLPEDPDEDAIPIT). Positions 331–343 (LPEDPDEDAIPIT) are enriched in acidic residues.

As to quaternary structure, component of pre-catalytic and catalytic spliceosome complexes. Interacts (via N-terminus) with the spliceosome subunit SNRNP200/BRR2. Component of the minor spliceosome, which splices U12-type introns. Within this complex, interacts with SCNM1 and CRIPT. In terms of tissue distribution, ubiquitous.

The protein resides in the nucleus. It localises to the nucleus speckle. The enzyme catalyses S-ubiquitinyl-[E2 ubiquitin-conjugating enzyme]-L-cysteine + [acceptor protein]-L-lysine = [E2 ubiquitin-conjugating enzyme]-L-cysteine + N(6)-ubiquitinyl-[acceptor protein]-L-lysine.. Its pathway is protein modification; protein ubiquitination. Required for pre-mRNA splicing as component of the spliceosome. As a component of the minor spliceosome, involved in the splicing of U12-type introns in pre-mRNAs. E3 ubiquitin-protein ligase that catalyzes the transfer of ubiquitin onto target proteins. Catalyzes polyubiquitination of SNRNP200/BRR2 with non-canonical 'Lys-63'-linked polyubiquitin chains. Plays a role in DNA repair via its role in the synthesis of 'Lys-63'-linked polyubiquitin chains that recruit ALKBH3 and the ASCC complex to sites of DNA damage by alkylating agents. Ubiquitinates CXCR4, leading to its degradation, and thereby contributes to the termination of CXCR4 signaling. The protein is E3 ubiquitin-protein ligase RNF113A (RNF113A) of Homo sapiens (Human).